Reading from the N-terminus, the 429-residue chain is Lysine-specific demethylase JMJ30 (429 aa).

In terms of domain architecture, JmjC spans 272–429; that stretch reads SSPMEPTYLA…WSNEAESSSS (158 aa). Fe cation-binding residues include His-326, Asp-328, and His-405.

The protein belongs to the JARID1 histone demethylase family. Interacts with EFM. Binds to ATXR2, ARF7 and ARF19. Fe(2+) is required as a cofactor. Expressed ubiquitously in vasculatures, roots, rosette leaves, stems, inflorescences and siliques. Mainly present in the root meristem and root differentiation area. Observed at high level in callus.

The protein localises to the nucleus. Its subcellular location is the cytoplasm. It is found in the endoplasmic reticulum. It catalyses the reaction N(6),N(6),N(6)-trimethyl-L-lysyl(36)-[histone H3] + 2 2-oxoglutarate + 2 O2 = N(6)-methyl-L-lysyl(36)-[histone H3] + 2 formaldehyde + 2 succinate + 2 CO2. The enzyme catalyses N(6),N(6),N(6)-trimethyl-L-lysyl(27)-[histone H3] + 2 2-oxoglutarate + 2 O2 = N(6)-methyl-L-lysyl(27)-[histone H3] + 2 formaldehyde + 2 succinate + 2 CO2. The catalysed reaction is N(6),N(6)-dimethyl-L-lysyl(36)-[histone H3] + 2 2-oxoglutarate + 2 O2 = L-lysyl(36)-[histone H3] + 2 formaldehyde + 2 succinate + 2 CO2. In terms of biological role, histone demethylase that demethylates 'Lys-36' (H3K36me) of histone H3 with a specific activity for H3K36me3 and H3K36me2. Also active on 'Lys-27' (H3K27me) of histone H3 with a specific activity for H3K27me3 and H3K27me2. No activity on H3K36me1 and H3K27me1. Involved in the control of flowering time by demethylating H3K36me2 at the FT locus and repressing its expression. Acts within the central clock and contributes, in parallel with LUX, to temperature compensation, probably as a component of the evening complex, to maintain circadian period at increasing temperatures; this mechanism involves binding to and regulation of CCA1 and PRR7 promoters. Works in concert with TOC1 to promote the morning-phased clock genes CCA1 and LHY which function as components of the central oscillator. Together with JMJ32, regulates the flowering-repressor FLOWERING LOCUS C (FLC) locus by removing the repressive histone modification H3 lysine 27 trimethylation (H3K27me3), especially at elevated temperatures (e.g. 29 degrees Celsius), thus preventing extreme precocious flowering. JMJ30 and JMJ32 are regulators involved in the integration of abscisic acid (ABA) and brassinosteroids (BR) signaling pathways. Together with JMJ32, controls ABA-mediated growth arrest during the post-germination stage in unfavorable conditions, and responses to ABA during root development, via the removal of repressive histone mark (H3K27me3) from the SnRK2.8 promoter, thus promoting SnRK2.8 expression and subsequent kinase-dependent ABI3 activation. In addition, removes the repressive histone marks (H3K27me3) from the BZR1 locus in response to stress and ABA, thus activating the BR signaling pathway which, in turn, inhibits the ABA signaling pathway. Able to drive tissue identity changes to promote callus formation form somatic cells via a massive genome-wide chromatin remodeling (e.g. H3K9me3 demethylation) leading to the induction of Lateral organ Boundaries-Domain (LBD) genes (e.g. LBD16 and LBD29) that establish root primordia; when in complex with ARF proteins (e.g. ARF7 and ARF19), recruits ATXR2 which promotes the deposition of H3K36me3 at LBD genes promoters, thus ensuring their stable activation during callus formation. This Arabidopsis thaliana (Mouse-ear cress) protein is Lysine-specific demethylase JMJ30.